The sequence spans 106 residues: uncharacterized protein (106 aa).

2 helical membrane passes run 53-70 (LLLLTAAILYIVMPLDII) and 74-93 (ILGLGFIDDAAVLGLIWTLI).

Its subcellular location is the cell membrane. This is an uncharacterized protein from Bacillus subtilis (strain 168).